The chain runs to 663 residues: Translation factor guf1, mitochondrial (663 aa).

Residues 1–51 (MRGCLQVLRWLSTSTARRPVSSRPLHEIFPKSEFRRPFTSTILRQAQASRN) constitute a mitochondrion transit peptide. The region spanning 65–245 (ERFRNFCIVA…TVIERIPAPV (181 aa)) is the tr-type G domain. GTP contacts are provided by residues 74 to 81 (AHVDHGKS), 138 to 142 (DTPGH), and 192 to 195 (NKVD).

This sequence belongs to the TRAFAC class translation factor GTPase superfamily. Classic translation factor GTPase family. LepA subfamily.

The protein resides in the mitochondrion inner membrane. It carries out the reaction GTP + H2O = GDP + phosphate + H(+). Promotes mitochondrial protein synthesis. May act as a fidelity factor of the translation reaction, by catalyzing a one-codon backward translocation of tRNAs on improperly translocated ribosomes. Binds to mitochondrial ribosomes in a GTP-dependent manner. The protein is Translation factor guf1, mitochondrial (guf1) of Talaromyces marneffei (strain ATCC 18224 / CBS 334.59 / QM 7333) (Penicillium marneffei).